A 614-amino-acid polypeptide reads, in one-letter code: Chaperone protein DnaK (614 aa).

At T175 the chain carries Phosphothreonine; by autocatalysis. Residues 577 to 614 (QAGGAEGAADPNAAAGGAQSAPHDDNVVDADFKVDEDK) are disordered. Residues 583–597 (GAADPNAAAGGAQSA) show a composition bias toward low complexity. Residues 598-614 (PHDDNVVDADFKVDEDK) are compositionally biased toward basic and acidic residues.

Belongs to the heat shock protein 70 family.

Functionally, acts as a chaperone. This chain is Chaperone protein DnaK, found in Clostridium beijerinckii (strain ATCC 51743 / NCIMB 8052) (Clostridium acetobutylicum).